A 142-amino-acid polypeptide reads, in one-letter code: 3-hydroxyacyl-[acyl-carrier-protein] dehydratase FabZ (142 aa).

His-47 is a catalytic residue.

Belongs to the thioester dehydratase family. FabZ subfamily.

It localises to the cytoplasm. The catalysed reaction is a (3R)-hydroxyacyl-[ACP] = a (2E)-enoyl-[ACP] + H2O. Functionally, involved in unsaturated fatty acids biosynthesis. Catalyzes the dehydration of short chain beta-hydroxyacyl-ACPs and long chain saturated and unsaturated beta-hydroxyacyl-ACPs. The polypeptide is 3-hydroxyacyl-[acyl-carrier-protein] dehydratase FabZ (Thermoanaerobacter pseudethanolicus (strain ATCC 33223 / 39E) (Clostridium thermohydrosulfuricum)).